The following is a 546-amino-acid chain: Mercuric reductase (546 aa).

Positions 2–66 constitute an HMA domain; it reads NKFKVNISGM…AIDEANYQAG (65 aa). 2 residues coordinate a metal cation: Cys-13 and Cys-16. Ala-96, Gly-116, and Thr-121 together coordinate FAD. Cys-122 and Cys-127 are disulfide-bonded. Residues Lys-131 and Ala-195 each contribute to the FAD site. Residues 256-263 and Gly-346 each bind NAD(+); that span reads GSGYIGME. Positions 387 and 395 each coordinate FAD. Residues Cys-543 and Cys-544 each coordinate Hg(2+).

Belongs to the class-I pyridine nucleotide-disulfide oxidoreductase family. As to quaternary structure, homodimer. It depends on FAD as a cofactor.

It carries out the reaction Hg + NADP(+) + H(+) = Hg(2+) + NADPH. With respect to regulation, uses NADPH as the preferred electron donor, but shows slight activity with NADH as well. Inhibited by Cu(2+), Cd(2+), Zn(2+) and Co(2+), with Cu(2+) showing the strongest inhibition. Enzyme activity is enhanced by b-mercaptoethanol and NaCl up to concentrations of 500 uM and 100 mM respectively, followed by inhibition at higher concentrations. Its function is as follows. Resistance to Hg(2+) in bacteria appears to be governed by a specialized system which includes mercuric reductase. MerA protein is responsible for volatilizing mercury as Hg(0). Catalyzes reduction of Hg(2+) to elemental Hg, which is volatile and can diffuse out of cells passively. Plays a pivotal role in mercury resistance and cell protection. The sequence is that of Mercuric reductase from Lysinibacillus sphaericus (Bacillus sphaericus).